Reading from the N-terminus, the 507-residue chain is Transmembrane protein 184 homolog DDB_G0276041 (507 aa).

7 helical membrane-spanning segments follow: residues 13-33 (IVMLSIGSFFALGSIIIAVIL), 50-70 (IVRIIMIAPIYAIHSLLSLFF), 88-108 (AYVLYCFFKLLICFLGGEEAL), 141-161 (LGLVLQYAIIKPTLAIVAAIL), 179-199 (LWITVINNISVLIALYFLVMF), 222-242 (VVFFLFWQTVVITVLIWFDAL), and 260-280 (FLVCIEMFITSIAMGICFSYS). 6 N-linked (GlcNAc...) asparagine glycosylation sites follow: N360, N375, N470, N473, N477, and N498. Positions 448–500 (NGASNNNNNNNNNNNNINNNNNNNSNNSNNNSNSQFESIDINSNSVNSNKNQS) are disordered. Positions 451 to 500 (SNNNNNNNNNNNNINNNNNNNSNNSNNNSNSQFESIDINSNSVNSNKNQS) are enriched in low complexity.

The protein belongs to the TMEM184 family.

The protein resides in the cell membrane. Functionally, probable transporter. This is Transmembrane protein 184 homolog DDB_G0276041 (tmem184B) from Dictyostelium discoideum (Social amoeba).